The chain runs to 289 residues: MSALANHSFVKMNGIGNEIVVLDLRDVKHVVTPDEARAVAARVPYDQLMVLQPPRLDGTEAFIRIYNNDGSESGACGNGMRCVVRQVFEKTGQASATFETRAGLLNCWQGPAPDLYTVDMGVPKFGWQEIPLAEEFRDTRYIELQIGPIDAPILHSPSVVNMGNPHAVFWVDGDVNSYDLERFGPLLENHPIFPERANITLAHIVDRDHITMRTWERGAGLTKACGSAACATAVAAARLKRANRIVQMTLPGGELTIEWRERDDHVLMTGTATFEFEGRFEPQLFASVA.

Asn-17, Gln-47, and Asn-67 together coordinate substrate. Cys-76 acts as the Proton donor in catalysis. Substrate contacts are provided by residues Gly-77–Asn-78, Asn-164, Asn-198, and Glu-216–Arg-217. Cys-225 acts as the Proton acceptor in catalysis. Gly-226–Ser-227 lines the substrate pocket.

It belongs to the diaminopimelate epimerase family. Homodimer.

Its subcellular location is the cytoplasm. It catalyses the reaction (2S,6S)-2,6-diaminopimelate = meso-2,6-diaminopimelate. The protein operates within amino-acid biosynthesis; L-lysine biosynthesis via DAP pathway; DL-2,6-diaminopimelate from LL-2,6-diaminopimelate: step 1/1. Catalyzes the stereoinversion of LL-2,6-diaminopimelate (L,L-DAP) to meso-diaminopimelate (meso-DAP), a precursor of L-lysine and an essential component of the bacterial peptidoglycan. This chain is Diaminopimelate epimerase, found in Bradyrhizobium sp. (strain BTAi1 / ATCC BAA-1182).